Here is a 202-residue protein sequence, read N- to C-terminus: MPSPSRKSRSRSRSRSKSPKRSPAKKARKTPKKPRAAGGAKKPTTLSMIVAAITAMKNRKGSSVQAIRKYILANNKGINTSHLGSAMKLAFAKGLKSGVLVRPKTSAGASGATGSFRVGKAPASPKKAKKAKSPKKKSSKKSKNKSNNAKAKKSPKKKADSNGIRYQAYRYRRPRGGARYPFRYQAYRYRRPRGGPGTQFAL.

Residues 1–35 (MPSPSRKSRSRSRSRSKSPKRSPAKKARKTPKKPR) are compositionally biased toward basic residues. Disordered stretches follow at residues 1-46 (MPSP…PTTL) and 104-202 (KTSA…QFAL). The 80-residue stretch at 41–120 (KKPTTLSMIV…GATGSFRVGK (80 aa)) folds into the H15 domain. Basic residues predominate over residues 126-156 (KKAKKAKSPKKKSSKKSKNKSNNAKAKKSPK). A compositionally biased stretch (low complexity) spans 177–187 (GARYPFRYQAY).

In terms of processing, OE1 and OE3 are produced by post-translational cleavage of a common precursor. Sperm.

The protein resides in the nucleus. It localises to the chromosome. Its function is as follows. Linker histones are implicated in chromatin remodeling and/or transcriptional regulation during spermiogenesis, the process of spermatid maturation into spermatozoa. Protamines substitute for histones in the chromatin of sperm during the haploid phase of spermatogenesis. They compact sperm DNA into a highly condensed, stable and inactive complex. This is Sperm-specific H1/protamine-like protein type 1 from Ostrea edulis (Native oyster).